Here is a 415-residue protein sequence, read N- to C-terminus: uncharacterized protein (415 aa).

This is an uncharacterized protein from Escherichia coli (strain K12).